The sequence spans 138 residues: uncharacterized protein (138 aa).

A helical transmembrane segment spans residues 11–33 (ILLGLTLSLTFLYPLIITLIILY).

It is found in the membrane. This is an uncharacterized protein from Aquifex aeolicus (strain VF5).